Consider the following 787-residue polypeptide: LPS-assembly protein LptD (787 aa).

Positions 1-24 (MKKSFPTLLATLVWSALYSQHALA) are cleaved as a signal peptide.

This sequence belongs to the LptD family. In terms of assembly, component of the lipopolysaccharide transport and assembly complex. Interacts with LptE and LptA.

It localises to the cell outer membrane. Functionally, together with LptE, is involved in the assembly of lipopolysaccharide (LPS) at the surface of the outer membrane. This is LPS-assembly protein LptD from Pectobacterium atrosepticum (strain SCRI 1043 / ATCC BAA-672) (Erwinia carotovora subsp. atroseptica).